Reading from the N-terminus, the 952-residue chain is MLLLLGLCLGLPLFSESQEEARSWDDTSEQVVLRVPRQLRLLQRLKTKPLMAEFSVKSTIISRYAFTTVSCRMLNRASEDQEAEFQMQIPESAFITNFTMLIGDSVYRGEITQKDKKSSESVKDKRNRTSDDNEENGSDMFKASLVIPSKDKAAFFLSYEELLQRRLGKYEHSISVRPQQLVGRLTVEVDILERSGITSLEVLPLHNSRKKGSGKAEGDVGPPPSTLINQNETFAKVIFKPTVVQQAKIAQNGILGDFIVRYDVEREQNIGDIQVLNGYFVHYFAPKNLPPLPKNVVFVLDISASMVGAKLQQTREALVTILNDLRPQDRFNIIGFSNRIKMWKDHLLPVTPDNIRNGKIYMYHLSPTGGTDINGALQAAIKLLNNYVAQNDIEDRSVSLIIFLTDGKPTFGETNTLKILSNTKEATRGQICIFTVGIGDDVDFKLLEKLSLENCGLTRRVHEEDKAGAQLIGFYDEIRTPLLSDIRIDYPPDVVEHATKTLFPNYFNGSEIVIAGKMVDKKFDQLHVEVTASNSKKFVILKRDIPVEFRKMGNDVSVTPGSARDGGKDLNHIERLWSYLTVKELLSSWRQSNSEQEKEQLRQKAQDLALNYHFLTPFTSMKLRKPGLRTNQLEDTYGMSAATGPATVVQNLREAGKQPEPDLKKTYDPRIKISKTSVDGDPHFVVDFPLSKLTVCFNIDGEPGDILRLVSDHLNSGVTVNGELIGAPAPPNGHKKQRTYFRTITILINRPERSYLEITPSRVILDGGDRLVLPCNQSVVVGSRGLEVSVSANANITVVIQGNIAFVILIHLYKNPAPFQRDHLGFYIANSRGLSDNCHGLLGQFLNQDAKLVGAPEEYGKNLSNQPFPRAEGMPEAILKVKGRRVPVVWKQRKIYNGQAQVDCWFDRNNAAKLIDGVYKDYLASHPFDTESALGLSTPRKPETDRPHEESV.

The signal sequence occupies residues methionine 1 to serine 17. Residues valine 35–glutamate 161 form the VIT domain. Residues asparagine 97, asparagine 127, asparagine 136, and asparagine 231 are each glycosylated (N-linked (GlcNAc...) asparagine). Residues glutamine 113–aspartate 131 are compositionally biased toward basic and acidic residues. The tract at residues glutamine 113–serine 138 is disordered. A VWFA domain is found at asparagine 295 to isoleucine 478. 4 N-linked (GlcNAc...) asparagine glycosylation sites follow: asparagine 508, asparagine 776, asparagine 795, and asparagine 862. The disordered stretch occupies residues alanine 933–valine 952. The segment covering arginine 940–valine 952 has biased composition (basic and acidic residues).

The protein belongs to the ITIH family.

It is found in the secreted. May act as a tumor suppressor. The chain is Inter-alpha-trypsin inhibitor heavy chain H5 (Itih5) from Mus musculus (Mouse).